Reading from the N-terminus, the 243-residue chain is Carboxy-S-adenosyl-L-methionine synthase (243 aa).

Residues tyrosine 40, 65–67 (GCS), 90–91 (DN), 118–119 (DI), asparagine 133, and arginine 200 contribute to the S-adenosyl-L-methionine site.

The protein belongs to the class I-like SAM-binding methyltransferase superfamily. Cx-SAM synthase family. In terms of assembly, homodimer.

The catalysed reaction is prephenate + S-adenosyl-L-methionine = carboxy-S-adenosyl-L-methionine + 3-phenylpyruvate + H2O. Functionally, catalyzes the conversion of S-adenosyl-L-methionine (SAM) to carboxy-S-adenosyl-L-methionine (Cx-SAM). In Shewanella piezotolerans (strain WP3 / JCM 13877), this protein is Carboxy-S-adenosyl-L-methionine synthase.